Reading from the N-terminus, the 167-residue chain is Ion-translocating oxidoreductase complex subunit B (167 aa).

A hydrophobic region spans residues 1–22 (MITLIIFSFLSFLLGIILSFTA). Residues 28-87 (QEDPIVAIVNELLPQSQCAQCGYSGCYPYAKAIVENSEKINKCIPGGTDLISAISSVLSI) enclose the 4Fe-4S domain. Positions 45, 48, 53, 70, 113, 116, 119, 123, 143, 146, 149, and 153 each coordinate [4Fe-4S] cluster. 2 consecutive 4Fe-4S ferredoxin-type domains span residues 104–133 (NTVLINESNCVGCSKCASFCPVDAIVGAPN) and 134–163 (FIHTVLQEFCTGCNICLLHCPTNCIEIKKE).

It belongs to the 4Fe4S bacterial-type ferredoxin family. RnfB subfamily. In terms of assembly, the complex is composed of six subunits: RnfA, RnfB, RnfC, RnfD, RnfE and RnfG. [4Fe-4S] cluster is required as a cofactor.

The protein localises to the cell inner membrane. Functionally, part of a membrane-bound complex that couples electron transfer with translocation of ions across the membrane. This is Ion-translocating oxidoreductase complex subunit B from Buchnera aphidicola subsp. Acyrthosiphon pisum (strain 5A).